A 112-amino-acid polypeptide reads, in one-letter code: Putative galactitol utilization operon repressor (112 aa).

One can recognise an HTH deoR-type domain in the interval 5-60; it reads SFERRNKIIQLVNEQGTVLVQDLAGVFAASEATIRADLRFLEQKGVVTRFHGGAAK. Residues 22–41 constitute a DNA-binding region (H-T-H motif); the sequence is VLVQDLAGVFAASEATIRAD.

Its function is as follows. Repressor of the gat operon for galacticol transport and metabolism. In K12 strains the operon is constitutively expressed because this gene is inactive. The polypeptide is Putative galactitol utilization operon repressor (gatR) (Escherichia coli (strain K12)).